Here is a 723-residue protein sequence, read N- to C-terminus: MTTSASLERTPSKRDRDRERDNSSGLGSAGSLPASPQSAITVSPSSPATPKRPLRTSTPSLERKREREDREDREDRKERQERHERDRDHERFAAVFSTASTTVPTNTSSSSGLAPEQLRIPTGAAAFSGFPGLHSMSSLMLPSSAAVAAAAAAPFLPWSPILLPPWNHALLPAAFYPAALRNALPGLFDAKVPSSQRSGFHISDILNLEGSELKNAAAAAAAAAHHGSDLSHHSASESTSGHRGQGSHTSPSALSPTPAGVSADEHHNGSGTGGGAGEADHHSTTEHHAPPSHPQQQHPHHQQHHHPHLLLPQQHHQQAVAPLPLAHHQSGEAQSHAHANAAAAHLLASHNAAAAAAVAAGQYLPNLPKNFPGSFGDEMSSYHHMAQTMLQHSGRSAWIKENELYGTQQPASPDSTSPVTSEVSYTYIGSNCQTSPALSGDYKSYSRSADSDALSVGDALHTLHGSSGNGSAGGAPTAHALHNNNNNTTNNNNHSLKAEGINGAGSGHDDSLNEDGIEEDIDDVDDADGSGGGDANGSDGLPNKKRKRRVLFTKAQTYELERRFRQQRYLSAPEREHLASLIRLTPTQVKIWFQNHRYKTKRAQNEKGYEGHPGLLHGHATHPHHPSALPSPRRVAVPVLVRNGKPCLGDSSKLGADCVSVSSATATAMQNAAAHHLVALNGAAAYQHAAAAAAGLHAHAHAHAHAHGHGHPHAHAQRAAWWP.

4 disordered regions span residues 1–115 (MTTS…GLAP), 224–307 (AHHG…HHHP), 465–549 (GSSG…RKRR), and 703–723 (HAHA…AWWP). Residues 10–22 (TPSKRDRDRERDN) show a composition bias toward basic and acidic residues. Positions 23–36 (SSGLGSAGSLPASP) are enriched in low complexity. Residues 37–48 (QSAITVSPSSPA) show a composition bias toward polar residues. Basic and acidic residues predominate over residues 61–92 (LERKREREDREDREDRKERQERHERDRDHERF). Low complexity predominate over residues 97-111 (STASTTVPTNTSSSS). Residues 226 to 235 (HGSDLSHHSA) are compositionally biased toward basic and acidic residues. Over residues 237 to 255 (ESTSGHRGQGSHTSPSALS) the composition is skewed to polar residues. Positions 278–289 (EADHHSTTEHHA) are enriched in basic and acidic residues. Basic residues predominate over residues 298–307 (HPHHQQHHHP). The span at 483–493 (NNNNNTTNNNN) shows a compositional bias: low complexity. Positions 512-528 (LNEDGIEEDIDDVDDAD) are enriched in acidic residues. Residues 545 to 604 (KRKRRVLFTKAQTYELERRFRQQRYLSAPEREHLASLIRLTPTQVKIWFQNHRYKTKRAQ) constitute a DNA-binding region (homeobox). The segment covering 703–716 (HAHAHGHGHPHAHA) has biased composition (basic residues).

This sequence belongs to the NK-2 homeobox family. In terms of tissue distribution, expressed in the CNS and midgut.

Its subcellular location is the nucleus. Functionally, probable transcriptional regulator involved in the regulation of the proneural AS-C genes and the neurogenic genes of the enhancer of split complex. Could specifically activate proneural genes in the ventral-most neuroectoderm. In Drosophila melanogaster (Fruit fly), this protein is Homeobox protein vnd (vnd).